A 214-amino-acid chain; its full sequence is Large ribosomal subunit protein uL3 (214 aa).

This sequence belongs to the universal ribosomal protein uL3 family. Part of the 50S ribosomal subunit. Forms a cluster with proteins L14 and L19.

Its function is as follows. One of the primary rRNA binding proteins, it binds directly near the 3'-end of the 23S rRNA, where it nucleates assembly of the 50S subunit. The polypeptide is Large ribosomal subunit protein uL3 (Streptomyces coelicolor (strain ATCC BAA-471 / A3(2) / M145)).